A 503-amino-acid chain; its full sequence is MSAALRFDNIGKVFPGVRALDGISFDVHAGEVHGLMGENGAGKSTLLKILGGEYQPDAGSVLVDGRPVQFANAAASIAAGIAVIHQELQYVPDLTVAENLLLGRLPNAFGWVKKREAKRYVRERLAEMGVDLDPDARLGRLSIAQRQMVEICKALMRNARVIALDEPTSSLSHRETEVLFKLVDDLRAQGRALIYISHRMDEIYRLCDACTIFRDGRKIASHDALADVPRERLVAEMVGREIADIYHYAPRTLGDVRFSAEGVDGPALREPASFSVRAGEIVGFFGLVGAGRSELMRLVYGADRRRAGALTLDGKRIDVKRTGDAIRHGIVLCPEDRKEEGIIAIASVAENINISCRRHSLRAGLFINGKTESETADRFIQRLKIKTPNRRQKIRFLSGGNQQKAILSRWLAEPDLKVVILDEPTRGIDVGAKHEIYDVIYRLAERGCAIVMVSSELPEVLGVSDRIVVMREGRIAGELPRADANEHAVLNLALPQTSAVEAA.

ABC transporter domains follow at residues 5-240 (LRFD…MVGR) and 251-497 (RTLG…LPQT). Residue 37-44 (GENGAGKS) coordinates ATP.

It belongs to the ABC transporter superfamily. Arabinose importer (TC 3.A.1.2.2) family. In terms of assembly, the complex is composed of two ATP-binding proteins (AraG), two transmembrane proteins (AraH) and a solute-binding protein (AraF).

The protein localises to the cell inner membrane. It carries out the reaction L-arabinose(out) + ATP + H2O = L-arabinose(in) + ADP + phosphate + H(+). In terms of biological role, part of the ABC transporter complex AraFGH involved in arabinose import. Responsible for energy coupling to the transport system. This chain is Arabinose import ATP-binding protein AraG 1, found in Burkholderia cenocepacia (strain HI2424).